The chain runs to 217 residues: Eukaryotic translation initiation factor 4E (217 aa).

The interval 1–30 (MATVEPETTPTPNPPTTEEEKTESNQEVAN) is disordered. Residue A2 is modified to N-acetylalanine. Position 22 is a phosphothreonine (T22). The EIF4EBP1/2/3 binding stretch occupies residues 37-40 (HPLQ). 56 to 57 (WQ) is a binding site for mRNA. The tract at residues 73–77 (WALYN) is EIF4EBP1/2/3 binding. 102-103 (WE) provides a ligand contact to mRNA. The segment at 132 to 139 (ETLLCLIG) is EIF4EBP1/2/3 binding. Residues 157 to 162 (RAKGDK) and 205 to 207 (TKS) contribute to the mRNA site. Residue S209 is modified to Phosphoserine; by PKC and MKNK2.

It belongs to the eukaryotic initiation factor 4E family. In terms of assembly, eIF4F is a multi-subunit complex, the composition of which varies with external and internal environmental conditions. It is composed of at least EIF4A, EIF4E and EIF4G1/EIF4G3. EIF4E is also known to interact with other partners. Interacts with EIF4ENIF1/4E-T; promotes recruitment to P-bodies and import into the nucleus. Hypophosphorylated EIF4EBP1, EIF4EBP2 and EIF4EBP3 compete with EIF4G1/EIF4G3 to interact with EIF4E; insulin stimulated MAP-kinase (MAPK1 and MAPK3) phosphorylation of EIF4EBP1 causes dissociation of the complex allowing EIF4G1/EIF4G3 to bind and consequent initiation of translation. Interacts mutually exclusive with EIF4A1 or EIF4A2. Interacts with NGDN and PIWIL2. Component of the CYFIP1-EIF4E-FMR1 complex composed of CYFIP, EIF4E and FMR1. Interacts directly with CYFIP1. Interacts with CLOCK. Binds to MKNK2 in nucleus. Interacts with LIMD1, WTIP and AJUBA. Interacts with APOBEC3G in an RNA-dependent manner. Interacts with LARP1. Interacts with METTL3. Interacts with RBM24; this interaction prevents EIF4E from binding to p53/TP53 mRNA and inhibits the assembly of translation initiation complex. Interacts with DDX3X; interaction is direct and in an RNA-independent manner; this interaction enhances EIF4E cap-binding ability and is required for the repression of cap-dependent translation and the increase of IRES-mediated translation. DDX3X competes with EIF4G1 for interaction with EIF4E. Interacts with EIF4G1; which in a mutual exclusive interaction associates either with EIF1 or with EIF4E on a common binding site. Interacts with BTG4 and CNOT7. Interacts with LRPPRC (via N-terminus); the interaction promotes association of EIF4E with 4ESE-containing mRNAs. Interacts with mRNA cleavage enzyme CPSF3 and its cofactor CPSF1. Interacts (via RING-type zinc finger) with PML; the interaction results in conformational changes of both interacting proteins and reduces EIF4E affinity for the 5' m7G cap of mRNA, thus reducing EIF4E-mediated mRNA nuclear export. Interacts with homeobox protein HHEX/PRH; the interaction inhibits EIF4E-mediated mRNA nuclear export. Interacts with homeobox protein HOXA9; the interaction positively regulates EIF4E-mediated mRNA nuclear export. Interacts with homeobox protein EMX2. (Microbial infection) Interacts with Lassa virus Z protein. As to quaternary structure, (Microbial infection) Interacts with Lymphocytic choriomeningitis virus (LCMV) Z protein (via RING-type zinc finger); the interaction results in conformational changes of both interacting proteins and reduces EIF4E affinity for the m7G mRNA cap structure. In terms of assembly, (Microbial infection) Interacts (via cap-binding region) with potato virus Y VPg; this interaction mediates the translation of the VPg-viral RNA conjugates and interferes with the cellular EIF4E-dependent mRNA export and translation. In terms of processing, phosphorylation increases the ability of the protein to bind to mRNA caps and to form the eIF4F complex. Phosphorylation also enhances its mRNA transport function. Phosphorylation at Ser-209 is not essential for protein synthesis.

The protein localises to the cytoplasm. It localises to the P-body. The protein resides in the stress granule. It is found in the nucleus. Its subcellular location is the nucleus speckle. The protein localises to the nuclear body. Functionally, acts in the cytoplasm to initiate and regulate protein synthesis and is required in the nucleus for export of a subset of mRNAs from the nucleus to the cytoplasm which promotes processes such as RNA capping, processing and splicing. Component of the protein complex eIF4F, which is involved in the recognition of the mRNA cap, ATP-dependent unwinding of 5'-terminal secondary structure and recruitment of mRNA to the ribosome. This protein recognizes and binds the 7-methylguanosine (m7G)-containing mRNA cap during an early step in the initiation of protein synthesis and facilitates ribosome binding by inducing the unwinding of the mRNAs secondary structures. Together with EIF4G1, antagonizes the scanning promoted by EIF1-EIF4G1 and is required for TISU translation, a process where the TISU element recognition makes scanning unnecessary. In addition to its role in translation initiation, also acts as a regulator of translation and stability in the cytoplasm. Component of the CYFIP1-EIF4E-FMR1 complex which binds to the mRNA cap and mediates translational repression: in the complex, EIF4E mediates the binding to the mRNA cap. Component of a multiprotein complex that sequesters and represses translation of proneurogenic factors during neurogenesis. In P-bodies, component of a complex that mediates the storage of translationally inactive mRNAs in the cytoplasm and prevents their degradation. May play an important role in spermatogenesis through translational regulation of stage-specific mRNAs during germ cell development. As well as its roles in translation, also involved in mRNA nucleocytoplasmic transport. Its role in mRNA export from the nucleus to the cytoplasm relies on its ability to bind the m7G cap of RNAs and on the presence of the 50-nucleotide EIF4E sensitivity element (4ESE) in the 3'UTR of sensitive transcripts. Interaction with the 4ESE is mediated by LRPPRC which binds simultaneously to both EIF4E and the 4ESE, thereby acting as a platform for assembly for the RNA export complex. EIF4E-dependent mRNA export is independent of ongoing protein or RNA synthesis and is also NFX1-independent but is XPO1-dependent with LRPPRC interacting with XPO1 to form an EIF4E-dependent mRNA export complex. Alters the composition of the cytoplasmic face of the nuclear pore to promote RNA export by reducing RANBP2 expression, relocalizing nucleoporin NUP214 and increasing expression of RANBP1 and RNA export factors DDX19 and GLE1. Promotes the nuclear export of cyclin CCND1 mRNA. Promotes the nuclear export of NOS2/iNOS mRNA. Promotes the nuclear export of MDM2 mRNA. Promotes the export of additional mRNAs, including others involved in the cell cycle. In the nucleus, binds to capped splice factor-encoding mRNAs and stimulates their nuclear export to enhance splice factor production by increasing their cytoplasmic availability to the translation machinery. May also regulate splicing through interaction with the spliceosome in an RNA and m7G cap-dependent manner. Also binds to some pre-mRNAs and may play a role in their recruitment to the spliceosome. Promotes steady-state capping of a subset of coding and non-coding RNAs by mediating nuclear export of capping machinery mRNAs including RNMT, RNGTT and RAMAC to enhance their translation. Stimulates mRNA 3'-end processing by promoting the expression of several core cleavage complex factors required for mRNA cleavage and polyadenylation, and may also have a direct effect through its interaction with the CPSF3 cleavage enzyme. Rescues cells from apoptosis by promoting activation of serine/threonine-protein kinase AKT1 through mRNA export of NBS1 which potentiates AKT1 phosphorylation and also through mRNA export of AKT1 effectors, allowing for increased production of these proteins. This Homo sapiens (Human) protein is Eukaryotic translation initiation factor 4E.